We begin with the raw amino-acid sequence, 344 residues long: DNA-directed RNA polymerase subunit alpha (344 aa).

Residues M1–P238 form an alpha N-terminal domain (alpha-NTD) region. Residues A254 to D344 form an alpha C-terminal domain (alpha-CTD) region.

The protein belongs to the RNA polymerase alpha chain family. In terms of assembly, homodimer. The RNAP catalytic core consists of 2 alpha, 1 beta, 1 beta' and 1 omega subunit. When a sigma factor is associated with the core the holoenzyme is formed, which can initiate transcription.

The enzyme catalyses RNA(n) + a ribonucleoside 5'-triphosphate = RNA(n+1) + diphosphate. Its function is as follows. DNA-dependent RNA polymerase catalyzes the transcription of DNA into RNA using the four ribonucleoside triphosphates as substrates. The protein is DNA-directed RNA polymerase subunit alpha of Helicobacter pylori (strain J99 / ATCC 700824) (Campylobacter pylori J99).